A 389-amino-acid polypeptide reads, in one-letter code: ATP-dependent (S)-NAD(P)H-hydrate dehydratase (389 aa).

Positions 53 to 389 (TLQLVRNIIP…RGGGRLPQAL (337 aa)) constitute a YjeF C-terminal domain. Phosphotyrosine is present on tyrosine 85. (6S)-NADPHX-binding positions include glutamate 153 and 205 to 211 (NHMEFSR). ATP contacts are provided by residues 245-249 (KGERD) and 264-273 (GSSRRCGGQG). A (6S)-NADPHX-binding site is contributed by aspartate 274. 2 disordered regions span residues 316 to 350 (KTRA…PGGC) and 369 to 389 (RSLH…PQAL).

This sequence belongs to the NnrD/CARKD family. The cofactor is Mg(2+).

It localises to the mitochondrion. It carries out the reaction (6S)-NADHX + ATP = ADP + phosphate + NADH + H(+). It catalyses the reaction (6S)-NADPHX + ATP = ADP + phosphate + NADPH + H(+). Its function is as follows. Catalyzes the dehydration of the S-form of NAD(P)HX at the expense of ATP, which is converted to ADP. Together with NAD(P)HX epimerase, which catalyzes the epimerization of the S- and R-forms, the enzyme allows the repair of both epimers of NAD(P)HX, a damaged form of NAD(P)H that is a result of enzymatic or heat-dependent hydration. This chain is ATP-dependent (S)-NAD(P)H-hydrate dehydratase, found in Macaca mulatta (Rhesus macaque).